We begin with the raw amino-acid sequence, 260 residues long: 3'-5' ssDNA/RNA exonuclease TatD (260 aa).

A divalent metal cation is bound by residues Glu-92, His-128, and His-153.

It belongs to the metallo-dependent hydrolases superfamily. TatD-type hydrolase family. TatD subfamily. In terms of assembly, monomer. The cofactor is Mg(2+).

The protein resides in the cytoplasm. 3'-5' exonuclease that prefers single-stranded DNA and RNA. May play a role in the H(2)O(2)-induced DNA damage repair. The polypeptide is 3'-5' ssDNA/RNA exonuclease TatD (Pantoea ananatis (strain LMG 20103)).